A 330-amino-acid chain; its full sequence is Src kinase-associated phosphoprotein 2-B (330 aa).

The disordered stretch occupies residues 57-84 (DKAEDDDQEENDGFPLPPDAVSLASDRD). The segment covering 59–68 (AEDDDQEEND) has biased composition (acidic residues). The PH domain occupies 105–208 (EYLKAGYLEK…WINAIMNSRG (104 aa)). The tract at residues 236-261 (ELPEESEKPVTETETQKATPVPVNNT) is disordered. Basic and acidic residues predominate over residues 240–250 (ESEKPVTETET). Polar residues predominate over residues 251 to 261 (QKATPVPVNNT). In terms of domain architecture, SH3 spans 268 to 329 (DYANFYRGLW…PKAYIIEMYD (62 aa)).

Belongs to the SKAP family. Phosphorylated on tyrosines.

It is found in the cytoplasm. In terms of biological role, may be involved in B-cell and macrophage adhesion processes. May play a role in src signaling pathway. This Xenopus laevis (African clawed frog) protein is Src kinase-associated phosphoprotein 2-B (skap2-b).